A 240-amino-acid polypeptide reads, in one-letter code: MLLGVNIDHVATLRQARGTRYPDPVKAALDAEEAGADGITVHLREDRRHIQERDVLLLKDVLQTRMNFEMGVTEEMMLFAEKIRPAHICLVPETRQELTTEGGLDVAGQEARIKAAVERLSRTGAEVSLFIDADERQIEASRRVGAPAIELHTGRYADAETPTDVAEELKRIVDGVAFGVGQGLIVNAGHGLHYHNVEAVAAIKGINELNIGHALVAHALFVGFKAAVAEMKALIVAASR.

N6 lines the 3-amino-2-oxopropyl phosphate pocket. Residue 8–9 coordinates 1-deoxy-D-xylulose 5-phosphate; that stretch reads DH. R17 provides a ligand contact to 3-amino-2-oxopropyl phosphate. The Proton acceptor role is filled by H42. The 1-deoxy-D-xylulose 5-phosphate site is built by R44 and H49. E69 acts as the Proton acceptor in catalysis. T99 lines the 1-deoxy-D-xylulose 5-phosphate pocket. The active-site Proton donor is the H190. 3-amino-2-oxopropyl phosphate is bound by residues G191 and 212-213; that span reads GH.

The protein belongs to the PNP synthase family. In terms of assembly, homooctamer; tetramer of dimers.

The protein localises to the cytoplasm. The catalysed reaction is 3-amino-2-oxopropyl phosphate + 1-deoxy-D-xylulose 5-phosphate = pyridoxine 5'-phosphate + phosphate + 2 H2O + H(+). It participates in cofactor biosynthesis; pyridoxine 5'-phosphate biosynthesis; pyridoxine 5'-phosphate from D-erythrose 4-phosphate: step 5/5. Functionally, catalyzes the complicated ring closure reaction between the two acyclic compounds 1-deoxy-D-xylulose-5-phosphate (DXP) and 3-amino-2-oxopropyl phosphate (1-amino-acetone-3-phosphate or AAP) to form pyridoxine 5'-phosphate (PNP) and inorganic phosphate. The protein is Pyridoxine 5'-phosphate synthase of Pseudomonas entomophila (strain L48).